Consider the following 380-residue polypeptide: Ankyrin repeat domain-containing protein 63 (380 aa).

5 ANK repeats span residues 11–40, 46–79, 83–112, 116–145, and 153–182; these read AGTR…RSII, QGRT…AVNL, RGRT…DPEA, AGNS…RLGL, and AGLT…RAAA. Low complexity-rich tracts occupy residues 181–203 and 216–226; these read AAAA…PAAS and RPLLARFARAA. The disordered stretch occupies residues 181–256; sequence AAAAAARGSN…GSERPELGRS (76 aa). Ser193 is modified (phosphoserine). Ser294 carries the post-translational modification Phosphoserine. The interval 309-368 is disordered; sequence PIGLSPHPEGGPGSGRLGLRRRSTAPDIPSLVGEAPGPESGPELEANALSVSVPGPNPWQ.

This is Ankyrin repeat domain-containing protein 63 from Homo sapiens (Human).